Here is a 144-residue protein sequence, read N- to C-terminus: MDEMNLGPEAQELHDSIVAEIQSGVLKLKDGLPFGTGDETEMQYDVTLRELTAGDMIDAQAAAEKLVMSKEGPVLVSSPSRMGLEMLRRQIASVGCIKGPLSMALIRKLSVDDFQRLSLATEMYDMAVAASLTQERGRVAAVPE.

Belongs to the mulikevirus tail assembly protein family.

Its subcellular location is the host cytoplasm. In terms of biological role, required for tail assembly. Together with FS-gp41, may act as a chaperone mediating the interaction between the tape measure protein (TMP) and the tail tube protein (TTP) thereby directing the polymerization of TTP to form a tail of the correct length (Potential). The chain is Probable tail assembly protein gp41 from Enterobacteriaceae (Bacteriophage Mu).